The sequence spans 280 residues: Large ribosomal subunit protein uL2 (280 aa).

2 disordered regions span residues 27-59 (STPE…GGHK) and 225-280 (VMNP…KHSR). 2 stretches are compositionally biased toward basic residues: residues 37–59 (LHGR…GGHK) and 268–280 (IVRR…KHSR).

The protein belongs to the universal ribosomal protein uL2 family. In terms of assembly, part of the 50S ribosomal subunit. Forms a bridge to the 30S subunit in the 70S ribosome.

In terms of biological role, one of the primary rRNA binding proteins. Required for association of the 30S and 50S subunits to form the 70S ribosome, for tRNA binding and peptide bond formation. It has been suggested to have peptidyltransferase activity; this is somewhat controversial. Makes several contacts with the 16S rRNA in the 70S ribosome. In Mycobacterium bovis (strain ATCC BAA-935 / AF2122/97), this protein is Large ribosomal subunit protein uL2.